Consider the following 308-residue polypeptide: Probable 5-dehydro-4-deoxyglucarate dehydratase (308 aa).

Belongs to the DapA family.

It carries out the reaction 5-dehydro-4-deoxy-D-glucarate + H(+) = 2,5-dioxopentanoate + CO2 + H2O. The protein operates within carbohydrate acid metabolism; D-glucarate degradation; 2,5-dioxopentanoate from D-glucarate: step 2/2. The protein is Probable 5-dehydro-4-deoxyglucarate dehydratase of Oceanobacillus iheyensis (strain DSM 14371 / CIP 107618 / JCM 11309 / KCTC 3954 / HTE831).